The sequence spans 213 residues: MDLTAENLGVRRGEDFIFMNISFKLSDGEALVLTGRNGSGKSTLLRTVAGLLRPEQGRVKIAGEGIDAEMRPSEAFHYLGHRNAMKTELTVAENLRFWKDFLGDFPGSTGVAIDEAAAIVGLAGITHLPFGYLSAGQQRRFAMAKLLVAWRPVWILDEPTAALDRAADAMFTDLVKSHLGKGGIVLAATHQPLGLEKAQELQMTGFAGVETWA.

Residues 3–211 (LTAENLGVRR…QMTGFAGVET (209 aa)) enclose the ABC transporter domain. 35-42 (GRNGSGKS) lines the ATP pocket.

Belongs to the ABC transporter superfamily. CcmA exporter (TC 3.A.1.107) family. In terms of assembly, the complex is composed of two ATP-binding proteins (CcmA) and two transmembrane proteins (CcmB).

Its subcellular location is the cell inner membrane. It carries out the reaction heme b(in) + ATP + H2O = heme b(out) + ADP + phosphate + H(+). Its function is as follows. Part of the ABC transporter complex CcmAB involved in the biogenesis of c-type cytochromes; once thought to export heme, this seems not to be the case, but its exact role is uncertain. Responsible for energy coupling to the transport system. The chain is Cytochrome c biogenesis ATP-binding export protein CcmA from Agrobacterium fabrum (strain C58 / ATCC 33970) (Agrobacterium tumefaciens (strain C58)).